The sequence spans 133 residues: Small ribosomal subunit protein uS9 (133 aa).

Residues 98 to 113 are compositionally biased toward basic and acidic residues; sequence RKPLKTEGHLSRDPRA. The tract at residues 98–133 is disordered; sequence RKPLKTEGHLSRDPRAKERRKYGLKKARKAPQFSKR. Basic residues predominate over residues 114-133; that stretch reads KERRKYGLKKARKAPQFSKR.

The protein belongs to the universal ribosomal protein uS9 family.

The sequence is that of Small ribosomal subunit protein uS9 from Synechococcus sp. (strain CC9902).